Reading from the N-terminus, the 585-residue chain is Probable long-chain-fatty-acid--AMP ligase FadD30 (585 aa).

This sequence belongs to the ATP-dependent AMP-binding enzyme family.

It functions in the pathway lipid metabolism; fatty acid biosynthesis. Its function is as follows. Catalyzes the activation of long-chain fatty acids as acyl-adenylates (acyl-AMP), which are then transferred to a multifunctional polyketide synthase (PKS) for further chain extension. The polypeptide is Probable long-chain-fatty-acid--AMP ligase FadD30 (fadD30) (Mycobacterium tuberculosis (strain CDC 1551 / Oshkosh)).